Reading from the N-terminus, the 880-residue chain is Alanine--tRNA ligase (880 aa).

Zn(2+) is bound by residues His-563, His-567, Cys-673, and His-677.

It belongs to the class-II aminoacyl-tRNA synthetase family. Zn(2+) is required as a cofactor.

It is found in the cytoplasm. The catalysed reaction is tRNA(Ala) + L-alanine + ATP = L-alanyl-tRNA(Ala) + AMP + diphosphate. Its function is as follows. Catalyzes the attachment of alanine to tRNA(Ala) in a two-step reaction: alanine is first activated by ATP to form Ala-AMP and then transferred to the acceptor end of tRNA(Ala). Also edits incorrectly charged Ser-tRNA(Ala) and Gly-tRNA(Ala) via its editing domain. The sequence is that of Alanine--tRNA ligase from Caulobacter vibrioides (strain ATCC 19089 / CIP 103742 / CB 15) (Caulobacter crescentus).